Consider the following 367-residue polypeptide: 4-hydroxy-3-methylbut-2-en-1-yl diphosphate synthase (flavodoxin) (367 aa).

Residues Cys268, Cys271, Cys303, and Glu310 each contribute to the [4Fe-4S] cluster site.

It belongs to the IspG family. [4Fe-4S] cluster serves as cofactor.

It catalyses the reaction (2E)-4-hydroxy-3-methylbut-2-enyl diphosphate + oxidized [flavodoxin] + H2O + 2 H(+) = 2-C-methyl-D-erythritol 2,4-cyclic diphosphate + reduced [flavodoxin]. The protein operates within isoprenoid biosynthesis; isopentenyl diphosphate biosynthesis via DXP pathway; isopentenyl diphosphate from 1-deoxy-D-xylulose 5-phosphate: step 5/6. Converts 2C-methyl-D-erythritol 2,4-cyclodiphosphate (ME-2,4cPP) into 1-hydroxy-2-methyl-2-(E)-butenyl 4-diphosphate. The sequence is that of 4-hydroxy-3-methylbut-2-en-1-yl diphosphate synthase (flavodoxin) from Shouchella clausii (strain KSM-K16) (Alkalihalobacillus clausii).